A 170-amino-acid polypeptide reads, in one-letter code: Superoxide dismutase [Fe] (170 aa).

Fe cation-binding residues include His-27, His-81, Asp-163, and His-167.

The protein belongs to the iron/manganese superoxide dismutase family. Homodimer. The cofactor is Fe cation.

The enzyme catalyses 2 superoxide + 2 H(+) = H2O2 + O2. In terms of biological role, destroys superoxide anion radicals which are normally produced within the cells and which are toxic to biological systems. This Raoultella planticola (Klebsiella planticola) protein is Superoxide dismutase [Fe] (sodA).